The sequence spans 166 residues: Large ribosomal subunit protein uL10 (166 aa).

The protein belongs to the universal ribosomal protein uL10 family. As to quaternary structure, part of the ribosomal stalk of the 50S ribosomal subunit. The N-terminus interacts with L11 and the large rRNA to form the base of the stalk. The C-terminus forms an elongated spine to which L12 dimers bind in a sequential fashion forming a multimeric L10(L12)X complex.

Forms part of the ribosomal stalk, playing a central role in the interaction of the ribosome with GTP-bound translation factors. This chain is Large ribosomal subunit protein uL10, found in Shewanella sediminis (strain HAW-EB3).